The chain runs to 187 residues: Interferon alpha-3 (187 aa).

The first 23 residues, 1–23, serve as a signal peptide directing secretion; the sequence is MALPCSFSVALVLLSCHSLCCLA. 2 cysteine pairs are disulfide-bonded: Cys24/Cys122 and Cys52/Cys160. N-linked (GlcNAc...) asparagine glycosylation is found at Asn94 and Asn101.

It belongs to the alpha/beta interferon family.

Its subcellular location is the secreted. Produced by macrophages, IFN-alpha have antiviral activities. Interferon stimulates the production of two enzymes: a protein kinase and an oligoadenylate synthetase. The chain is Interferon alpha-3 from Canis lupus familiaris (Dog).